Here is a 455-residue protein sequence, read N- to C-terminus: Bifunctional protein GlmU (455 aa).

The segment at 1-230 (MANRFAVILA…FDETIGINDR (230 aa)) is pyrophosphorylase. UDP-N-acetyl-alpha-D-glucosamine contacts are provided by residues 9-12 (LAAG), lysine 23, glutamine 73, and 78-79 (GT). Aspartate 103 contributes to the Mg(2+) binding site. 4 residues coordinate UDP-N-acetyl-alpha-D-glucosamine: glycine 140, glutamate 155, asparagine 170, and asparagine 228. Asparagine 228 serves as a coordination point for Mg(2+). The segment at 231–251 (IALAEAEKIMKKRINEQHMRN) is linker. Positions 252 to 455 (GVSIIDPEQT…KEEYASKFKK (204 aa)) are N-acetyltransferase. The UDP-N-acetyl-alpha-D-glucosamine site is built by arginine 333 and lysine 351. The active-site Proton acceptor is the histidine 363. Residues tyrosine 366 and asparagine 377 each coordinate UDP-N-acetyl-alpha-D-glucosamine. Residues 386–387 (NY), alanine 423, and arginine 440 each bind acetyl-CoA.

It in the N-terminal section; belongs to the N-acetylglucosamine-1-phosphate uridyltransferase family. The protein in the C-terminal section; belongs to the transferase hexapeptide repeat family. Homotrimer. The cofactor is Mg(2+).

The protein resides in the cytoplasm. The enzyme catalyses alpha-D-glucosamine 1-phosphate + acetyl-CoA = N-acetyl-alpha-D-glucosamine 1-phosphate + CoA + H(+). The catalysed reaction is N-acetyl-alpha-D-glucosamine 1-phosphate + UTP + H(+) = UDP-N-acetyl-alpha-D-glucosamine + diphosphate. Its pathway is nucleotide-sugar biosynthesis; UDP-N-acetyl-alpha-D-glucosamine biosynthesis; N-acetyl-alpha-D-glucosamine 1-phosphate from alpha-D-glucosamine 6-phosphate (route II): step 2/2. The protein operates within nucleotide-sugar biosynthesis; UDP-N-acetyl-alpha-D-glucosamine biosynthesis; UDP-N-acetyl-alpha-D-glucosamine from N-acetyl-alpha-D-glucosamine 1-phosphate: step 1/1. It functions in the pathway bacterial outer membrane biogenesis; LPS lipid A biosynthesis. Catalyzes the last two sequential reactions in the de novo biosynthetic pathway for UDP-N-acetylglucosamine (UDP-GlcNAc). The C-terminal domain catalyzes the transfer of acetyl group from acetyl coenzyme A to glucosamine-1-phosphate (GlcN-1-P) to produce N-acetylglucosamine-1-phosphate (GlcNAc-1-P), which is converted into UDP-GlcNAc by the transfer of uridine 5-monophosphate (from uridine 5-triphosphate), a reaction catalyzed by the N-terminal domain. The chain is Bifunctional protein GlmU from Oceanobacillus iheyensis (strain DSM 14371 / CIP 107618 / JCM 11309 / KCTC 3954 / HTE831).